Reading from the N-terminus, the 492-residue chain is Ribose import ATP-binding protein RbsA (492 aa).

ABC transporter domains are found at residues 3–239 and 249–492; these read IEMK…VGRS and AEIR…TGGQ. 35-42 provides a ligand contact to ATP; the sequence is GENGAGKS.

Belongs to the ABC transporter superfamily. Ribose importer (TC 3.A.1.2.1) family. As to quaternary structure, the complex is composed of an ATP-binding protein (RbsA), two transmembrane proteins (RbsC) and a solute-binding protein (RbsB).

It is found in the cell membrane. It carries out the reaction D-ribose(out) + ATP + H2O = D-ribose(in) + ADP + phosphate + H(+). Part of the ABC transporter complex RbsABC involved in ribose import. Responsible for energy coupling to the transport system. The protein is Ribose import ATP-binding protein RbsA of Lactococcus lactis subsp. lactis (strain IL1403) (Streptococcus lactis).